We begin with the raw amino-acid sequence, 253 residues long: Phosphate import ATP-binding protein PstB (253 aa).

Residues 5 to 248 enclose the ABC transporter domain; sequence IETVNLNVYY…PEHELTEKYV (244 aa). ATP is bound at residue 37–44; it reads GPSGCGKS.

It belongs to the ABC transporter superfamily. Phosphate importer (TC 3.A.1.7) family. The complex is composed of two ATP-binding proteins (PstB), two transmembrane proteins (PstC and PstA) and a solute-binding protein (PstS).

Its subcellular location is the cell membrane. It carries out the reaction phosphate(out) + ATP + H2O = ADP + 2 phosphate(in) + H(+). Part of the ABC transporter complex PstSACB involved in phosphate import. Responsible for energy coupling to the transport system. This chain is Phosphate import ATP-binding protein PstB, found in Thermococcus kodakarensis (strain ATCC BAA-918 / JCM 12380 / KOD1) (Pyrococcus kodakaraensis (strain KOD1)).